We begin with the raw amino-acid sequence, 118 residues long: Acidic elicitin A1 (118 aa).

Residues 1–20 (MNFRALFAATVAALVGSTSA) form the signal peptide. 3 disulfides stabilise this stretch: cysteine 23–cysteine 91, cysteine 47–cysteine 76, and cysteine 71–cysteine 115.

Belongs to the elicitin family.

It is found in the secreted. In terms of biological role, induces local and distal defense responses (incompatible hypersensitive reaction) in plants from the solanaceae and cruciferae families. Elicits leaf necrosis and causes the accumulation of pathogenesis-related proteins. Might interact with the lipidic molecules of the plasma membrane. The protein is Acidic elicitin A1 (B14) of Phytophthora cryptogea.